Here is a 53-residue protein sequence, read N- to C-terminus: uncharacterized protein (53 aa).

This is an uncharacterized protein from Haemophilus influenzae (strain ATCC 51907 / DSM 11121 / KW20 / Rd).